The sequence spans 222 residues: DnaJ homolog subfamily B member 9 (222 aa).

The N-terminal stretch at 1-23 is a signal peptide; that stretch reads MATPQSVFVFAICILMITELILA. One can recognise a J domain in the interval 26–90; sequence SYYDILGVPK…HRRKEYDTVG (65 aa). The segment at 91-222 is divergent targeting domain; that stretch reads HTAFTNGKGQ…VTTYTDCSGQ (132 aa). Phosphoserine is present on Ser133.

As to quaternary structure, interacts with HSPA5/BiP; interaction is direct. Interacts with ERN1/IRE1 (via the luminal region). Interacts with DERL1.

It localises to the endoplasmic reticulum lumen. Co-chaperone for Hsp70 protein HSPA5/BiP that acts as a key repressor of the ERN1/IRE1-mediated unfolded protein response (UPR). J domain-containing co-chaperones stimulate the ATPase activity of Hsp70 proteins and are required for efficient substrate recognition by Hsp70 proteins. In the unstressed endoplasmic reticulum, interacts with the luminal region of ERN1/IRE1 and selectively recruits HSPA5/BiP: HSPA5/BiP disrupts the dimerization of the active ERN1/IRE1 luminal region, thereby inactivating ERN1/IRE1. Also involved in endoplasmic reticulum-associated degradation (ERAD) of misfolded proteins. Required for survival of B-cell progenitors and normal antibody production. This is DnaJ homolog subfamily B member 9 from Cricetulus griseus (Chinese hamster).